Consider the following 130-residue polypeptide: Large ribosomal subunit protein bL12 (130 aa).

Belongs to the bacterial ribosomal protein bL12 family. As to quaternary structure, homodimer. Part of the ribosomal stalk of the 50S ribosomal subunit. Forms a multimeric L10(L12)X complex, where L10 forms an elongated spine to which 2 to 4 L12 dimers bind in a sequential fashion. Binds GTP-bound translation factors.

Functionally, forms part of the ribosomal stalk which helps the ribosome interact with GTP-bound translation factors. Is thus essential for accurate translation. The polypeptide is Large ribosomal subunit protein bL12 (Nostoc sp. (strain PCC 7120 / SAG 25.82 / UTEX 2576)).